An 876-amino-acid chain; its full sequence is DNA polymerase I (876 aa).

The 310-residue stretch at 1-310 (MKNKLVLIDG…FAIADSVTDE (310 aa)) folds into the 5'-3' exonuclease domain. Residues 289-876 (TDEGEKPLAG…HYGPTWYDAK (588 aa)) are subtilisin large fragment. The polymerase stretch occupies residues 469–876 (EQDRLLTELE…HYGPTWYDAK (408 aa)).

It belongs to the DNA polymerase type-A family. In terms of assembly, single-chain monomer with multiple functions.

It catalyses the reaction DNA(n) + a 2'-deoxyribonucleoside 5'-triphosphate = DNA(n+1) + diphosphate. In terms of biological role, in addition to polymerase activity, the recombinant enzyme has strand displacement and 5'-3' exonuclease activity, but lacks proofreading 3'-5' exonuclease activity. This is DNA polymerase I (polA) from Geobacillus stearothermophilus (Bacillus stearothermophilus).